A 796-amino-acid polypeptide reads, in one-letter code: Protocadherin beta-3 (796 aa).

A signal peptide spans 1–26; the sequence is MEAGGERFLRQRQVLLLFVFLGGSLA. The Extracellular portion of the chain corresponds to 27-690; the sequence is GSESRRYSVA…AQADLLTVYL (664 aa). 5 Cadherin domains span residues 35-133, 138-242, 247-347, 352-451, and 456-561; these read VAEE…SPVF, MHLK…APEF, YEVA…PPEL, VNSP…APAF, and YTLF…SPFV. Asn-169 carries N-linked (GlcNAc...) asparagine glycosylation. N-linked (GlcNAc...) asparagine glycans are attached at residues Asn-418 and Asn-436. Asn-567 is a glycosylation site (N-linked (GlcNAc...) asparagine). The region spanning 568 to 671 is the Cadherin 6 domain; sequence GSAPCTELVP…LVDGFSQPYL (104 aa). Residues 691–711 form a helical membrane-spanning segment; the sequence is VVALASVSSLFLFSVLLFVAV. The Cytoplasmic segment spans residues 712–796; sequence RLCRRSRAAS…PSFRKSFEFS (85 aa).

It is found in the cell membrane. Potential calcium-dependent cell-adhesion protein. May be involved in the establishment and maintenance of specific neuronal connections in the brain. This chain is Protocadherin beta-3 (PCDHB3), found in Pan troglodytes (Chimpanzee).